The chain runs to 471 residues: GTPase Der (471 aa).

EngA-type G domains lie at 3 to 168 (PIVA…PDLS) and 178 to 353 (VRVA…ANHA). GTP-binding positions include 9–16 (GRPNVGKS), 56–60 (DTGGI), 120–123 (NKVE), 184–191 (GRPNVGKS), 231–235 (DTAGM), and 296–299 (NKWD). In terms of domain architecture, KH-like spans 354–438 (RRISTRELND…PINLYFRTRE (85 aa)).

This sequence belongs to the TRAFAC class TrmE-Era-EngA-EngB-Septin-like GTPase superfamily. EngA (Der) GTPase family. In terms of assembly, associates with the 50S ribosomal subunit.

Its function is as follows. GTPase that plays an essential role in the late steps of ribosome biogenesis. This is GTPase Der from Symbiobacterium thermophilum (strain DSM 24528 / JCM 14929 / IAM 14863 / T).